A 367-amino-acid chain; its full sequence is Heme A synthase (367 aa).

The next 8 membrane-spanning stretches (helical) occupy residues 26–46 (IRGW…VGGA), 111–131 (LLAR…WVTG), 139–159 (LPLL…WWMV), 174–194 (LATH…IYRG), 212–232 (AAVI…VAGL), 272–292 (FVHR…MIAA), 305–325 (SVLL…TLLL), and 327–347 (VPIG…GFAI). Residue histidine 274 participates in heme binding. Histidine 335 is a binding site for heme.

It belongs to the COX15/CtaA family. Type 2 subfamily. As to quaternary structure, interacts with CtaB. The cofactor is heme b.

Its subcellular location is the cell membrane. It carries out the reaction Fe(II)-heme o + 2 A + H2O = Fe(II)-heme a + 2 AH2. It functions in the pathway porphyrin-containing compound metabolism; heme A biosynthesis; heme A from heme O: step 1/1. Functionally, catalyzes the conversion of heme O to heme A by two successive hydroxylations of the methyl group at C8. The first hydroxylation forms heme I, the second hydroxylation results in an unstable dihydroxymethyl group, which spontaneously dehydrates, resulting in the formyl group of heme A. This chain is Heme A synthase, found in Sinorhizobium medicae (strain WSM419) (Ensifer medicae).